The chain runs to 540 residues: GMP synthase [glutamine-hydrolyzing] (540 aa).

The Glutamine amidotransferase type-1 domain maps to 26–216 (LIIILDFGSQ…VYHICDCEPT (191 aa)). Cys103 serves as the catalytic Nucleophile. Active-site residues include His190 and Glu192. The 199-residue stretch at 217 to 415 (WTTAAFVEEA…IGLPEEIVQR (199 aa)) folds into the GMPS ATP-PPase domain. 244 to 250 (SGGVDSS) is a binding site for ATP.

Homodimer.

It catalyses the reaction XMP + L-glutamine + ATP + H2O = GMP + L-glutamate + AMP + diphosphate + 2 H(+). The protein operates within purine metabolism; GMP biosynthesis; GMP from XMP (L-Gln route): step 1/1. Its function is as follows. Catalyzes the synthesis of GMP from XMP. This Nostoc punctiforme (strain ATCC 29133 / PCC 73102) protein is GMP synthase [glutamine-hydrolyzing].